Consider the following 1140-residue polypeptide: uncharacterized protein (1140 aa).

2 helical membrane-spanning segments follow: residues 8–28 and 1098–1118; these read FLLFGFALGSFGWFVASSAFT and IAITFTGSAALLSTIIASGVV.

This sequence to M.pneumoniae MPN_375 (in the N-terminal section), M.pneumoniae MPN_374 (in the central section) and M.pneumoniae MPN_373 (in the C-terminal section).

It localises to the cell membrane. This is an uncharacterized protein from Mycoplasma pneumoniae (strain ATCC 29342 / M129 / Subtype 1) (Mycoplasmoides pneumoniae).